Reading from the N-terminus, the 161-residue chain is Putative pre-16S rRNA nuclease (161 aa).

The protein belongs to the YqgF nuclease family.

Its subcellular location is the cytoplasm. Could be a nuclease involved in processing of the 5'-end of pre-16S rRNA. In Methylocella silvestris (strain DSM 15510 / CIP 108128 / LMG 27833 / NCIMB 13906 / BL2), this protein is Putative pre-16S rRNA nuclease.